The sequence spans 182 residues: Large ribosomal subunit protein uL10 (182 aa).

The protein belongs to the universal ribosomal protein uL10 family. As to quaternary structure, part of the ribosomal stalk of the 50S ribosomal subunit. The N-terminus interacts with L11 and the large rRNA to form the base of the stalk. The C-terminus forms an elongated spine to which L12 dimers bind in a sequential fashion forming a multimeric L10(L12)X complex.

Functionally, forms part of the ribosomal stalk, playing a central role in the interaction of the ribosome with GTP-bound translation factors. In Chloroflexus aurantiacus (strain ATCC 29364 / DSM 637 / Y-400-fl), this protein is Large ribosomal subunit protein uL10.